Here is a 181-residue protein sequence, read N- to C-terminus: Aminoglycoside 2'-N-acetyltransferase (181 aa).

Residues 11-162 (VHTADLDSET…DGTVFVLPID (152 aa)) form the N-acetyltransferase domain. Substrate contacts are provided by residues D35 and 82–83 (EG). CoA is bound by residues 84 to 86 (VAV) and 91 to 96 (RGQRLV). Substrate-binding positions include S117 and 151–152 (DD).

It belongs to the AAC(2')-I acetyltransferase family. Homodimer.

Its function is as follows. Catalyzes the coenzyme A-dependent acetylation of the 2' hydroxyl or amino group of a broad spectrum of aminoglycosides. It confers resistance to aminoglycosides. This chain is Aminoglycoside 2'-N-acetyltransferase (aac), found in Mycobacterium bovis (strain ATCC BAA-935 / AF2122/97).